Here is a 71-residue protein sequence, read N- to C-terminus: Translational regulator CsrA (71 aa).

This sequence belongs to the CsrA/RsmA family. As to quaternary structure, homodimer; the beta-strands of each monomer intercalate to form a hydrophobic core, while the alpha-helices form wings that extend away from the core.

The protein resides in the cytoplasm. Its function is as follows. A key translational regulator that binds mRNA to regulate translation initiation and/or mRNA stability. Mediates global changes in gene expression, shifting from rapid growth to stress survival by linking envelope stress, the stringent response and the catabolite repression systems. Usually binds in the 5'-UTR; binding at or near the Shine-Dalgarno sequence prevents ribosome-binding, repressing translation, binding elsewhere in the 5'-UTR can activate translation and/or stabilize the mRNA. Its function is antagonized by small RNA(s). In Pseudoalteromonas atlantica (strain T6c / ATCC BAA-1087), this protein is Translational regulator CsrA.